A 182-amino-acid chain; its full sequence is Translation initiation factor IF-3 (182 aa).

The disordered stretch occupies residues 1–22 (MPLGDCNISTPDNKQNRKNQEI).

It belongs to the IF-3 family. In terms of assembly, monomer.

The protein localises to the cytoplasm. In terms of biological role, IF-3 binds to the 30S ribosomal subunit and shifts the equilibrium between 70S ribosomes and their 50S and 30S subunits in favor of the free subunits, thus enhancing the availability of 30S subunits on which protein synthesis initiation begins. The sequence is that of Translation initiation factor IF-3 from Xanthomonas axonopodis pv. citri (strain 306).